We begin with the raw amino-acid sequence, 407 residues long: Betaine--homocysteine S-methyltransferase 1 (407 aa).

A Hcy-binding domain is found at 11-314 (KGILERLNAG…YHIRAIAEEL (304 aa)). K40, K93, and K98 each carry N6-succinyllysine. C217 lines the Zn(2+) pocket. Residues K232 and K241 each carry the N6-succinyllysine modification. Positions 299 and 300 each coordinate Zn(2+). At S330 the chain carries Phosphoserine. K340 and K377 each carry N6-succinyllysine.

Homotetramer. Zn(2+) serves as cofactor.

The protein localises to the cytoplasm. The protein resides in the cytosol. It localises to the nucleus. The catalysed reaction is L-homocysteine + glycine betaine = N,N-dimethylglycine + L-methionine. The protein operates within amine and polyamine degradation; betaine degradation; sarcosine from betaine: step 1/2. It functions in the pathway amino-acid biosynthesis; L-methionine biosynthesis via de novo pathway; L-methionine from L-homocysteine (BhmT route): step 1/1. Its function is as follows. Involved in the regulation of homocysteine metabolism. Converts betaine and homocysteine to dimethylglycine and methionine, respectively. This reaction is also required for the irreversible oxidation of choline. This Mus musculus (Mouse) protein is Betaine--homocysteine S-methyltransferase 1 (Bhmt).